A 369-amino-acid chain; its full sequence is UDP-N-acetylglucosamine--N-acetylmuramyl-(pentapeptide) pyrophosphoryl-undecaprenol N-acetylglucosamine transferase (369 aa).

UDP-N-acetyl-alpha-D-glucosamine contacts are provided by residues T10–G12, N124, R166, S196, I251, and Q296.

This sequence belongs to the glycosyltransferase 28 family. MurG subfamily.

The protein localises to the cell membrane. It carries out the reaction di-trans,octa-cis-undecaprenyl diphospho-N-acetyl-alpha-D-muramoyl-L-alanyl-D-glutamyl-meso-2,6-diaminopimeloyl-D-alanyl-D-alanine + UDP-N-acetyl-alpha-D-glucosamine = di-trans,octa-cis-undecaprenyl diphospho-[N-acetyl-alpha-D-glucosaminyl-(1-&gt;4)]-N-acetyl-alpha-D-muramoyl-L-alanyl-D-glutamyl-meso-2,6-diaminopimeloyl-D-alanyl-D-alanine + UDP + H(+). It participates in cell wall biogenesis; peptidoglycan biosynthesis. Functionally, cell wall formation. Catalyzes the transfer of a GlcNAc subunit on undecaprenyl-pyrophosphoryl-MurNAc-pentapeptide (lipid intermediate I) to form undecaprenyl-pyrophosphoryl-MurNAc-(pentapeptide)GlcNAc (lipid intermediate II). This is UDP-N-acetylglucosamine--N-acetylmuramyl-(pentapeptide) pyrophosphoryl-undecaprenol N-acetylglucosamine transferase from Acetivibrio thermocellus (strain ATCC 27405 / DSM 1237 / JCM 9322 / NBRC 103400 / NCIMB 10682 / NRRL B-4536 / VPI 7372) (Clostridium thermocellum).